The primary structure comprises 593 residues: Auxin response factor 12 (593 aa).

A DNA-binding region (TF-B3) is located at residues 126–228 (FTKVLTASDT…ELRVGIRRAR (103 aa)). In terms of domain architecture, PB1 spans 511-592 (RTCTKVQMQG…MVKKIFIQKR (82 aa)).

This sequence belongs to the ARF family. In terms of assembly, homodimers and heterodimers.

Its subcellular location is the nucleus. Functionally, auxin response factors (ARFs) are transcriptional factors that bind specifically to the DNA sequence 5'-TGTCTC-3' found in the auxin-responsive promoter elements (AuxREs). Could act as transcriptional activator or repressor. Formation of heterodimers with Aux/IAA proteins may alter their ability to modulate early auxin response genes expression. The polypeptide is Auxin response factor 12 (ARF12) (Arabidopsis thaliana (Mouse-ear cress)).